Here is a 146-residue protein sequence, read N- to C-terminus: Anti-sigma F factor (146 aa).

Belongs to the anti-sigma-factor family.

The enzyme catalyses L-seryl-[protein] + ATP = O-phospho-L-seryl-[protein] + ADP + H(+). It carries out the reaction L-threonyl-[protein] + ATP = O-phospho-L-threonyl-[protein] + ADP + H(+). Its function is as follows. Binds to sigma F and blocks its ability to form an RNA polymerase holoenzyme (E-sigma F). Phosphorylates SpoIIAA on a serine residue. This phosphorylation may enable SpoIIAA to act as an anti-anti-sigma factor that counteracts SpoIIAB and thus releases sigma F from inhibition. This Lysinibacillus sphaericus (Bacillus sphaericus) protein is Anti-sigma F factor.